The sequence spans 473 residues: Flavonol 3-O-glucosyltransferase UGT89B1 (473 aa).

The Proton acceptor role is filled by H25. H25 contacts an anthocyanidin. D127 serves as the catalytic Charge relay. Residues A348, Q350, H365, W368, N369, S370, and E373 each contribute to the UDP-alpha-D-glucose site. A388 lines the an anthocyanidin pocket. UDP-alpha-D-glucose-binding residues include D389 and Q390.

This sequence belongs to the UDP-glycosyltransferase family.

The enzyme catalyses a flavonol + UDP-alpha-D-glucose = a flavonol 3-O-beta-D-glucoside + UDP + H(+). It carries out the reaction a 7-O-hydroxy-flavonol + UDP-alpha-D-glucose = a flavonol 7-O-beta-D-glucoside + UDP + H(+). In terms of biological role, possesses quercetin 3-O-glucosyltransferase, 7-O-glucosyltransferase and 4'-O-glucosyltransferase activities in vitro. Also active in vitro on benzoates and benzoate derivatives. This is Flavonol 3-O-glucosyltransferase UGT89B1 from Arabidopsis thaliana (Mouse-ear cress).